We begin with the raw amino-acid sequence, 461 residues long: uncharacterized protein (461 aa).

A run of 2 helical transmembrane segments spans residues 18-38 (IITWLLVILPFPILGTLFLIY) and 124-144 (FIFLEYFIIAEGLMWGEILSI). PLD phosphodiesterase domains follow at residues 197 to 224 (YNYRDHRKILVIDNKVAFNGGINLADEY) and 374 to 401 (TPGFVHAKVFIADDIKAVVGTINLDYRS).

This sequence belongs to the phospholipase D family. Cardiolipin synthase subfamily.

The protein resides in the cell membrane. This is an uncharacterized protein from Streptococcus mutans serotype c (strain ATCC 700610 / UA159).